Consider the following 430-residue polypeptide: Serine--tRNA ligase (430 aa).

231-233 is a binding site for L-serine; sequence TSE. 262-264 contacts ATP; that stretch reads RSE. Glutamate 285 serves as a coordination point for L-serine. 349–352 serves as a coordination point for ATP; it reads EISS. Serine 385 contributes to the L-serine binding site.

Belongs to the class-II aminoacyl-tRNA synthetase family. Type-1 seryl-tRNA synthetase subfamily. As to quaternary structure, homodimer. The tRNA molecule binds across the dimer.

It is found in the cytoplasm. It catalyses the reaction tRNA(Ser) + L-serine + ATP = L-seryl-tRNA(Ser) + AMP + diphosphate + H(+). The catalysed reaction is tRNA(Sec) + L-serine + ATP = L-seryl-tRNA(Sec) + AMP + diphosphate + H(+). It functions in the pathway aminoacyl-tRNA biosynthesis; selenocysteinyl-tRNA(Sec) biosynthesis; L-seryl-tRNA(Sec) from L-serine and tRNA(Sec): step 1/1. Functionally, catalyzes the attachment of serine to tRNA(Ser). Is also able to aminoacylate tRNA(Sec) with serine, to form the misacylated tRNA L-seryl-tRNA(Sec), which will be further converted into selenocysteinyl-tRNA(Sec). The polypeptide is Serine--tRNA ligase (Ruegeria pomeroyi (strain ATCC 700808 / DSM 15171 / DSS-3) (Silicibacter pomeroyi)).